We begin with the raw amino-acid sequence, 423 residues long: Glutamyl-tRNA reductase (423 aa).

Residues 49 to 52 (TCNR), serine 106, 111 to 113 (EPQ), and glutamine 117 each bind substrate. The Nucleophile role is filled by cysteine 50. NADP(+) is bound at residue 186-191 (GAGDTS).

The protein belongs to the glutamyl-tRNA reductase family. As to quaternary structure, homodimer.

The catalysed reaction is (S)-4-amino-5-oxopentanoate + tRNA(Glu) + NADP(+) = L-glutamyl-tRNA(Glu) + NADPH + H(+). It functions in the pathway porphyrin-containing compound metabolism; protoporphyrin-IX biosynthesis; 5-aminolevulinate from L-glutamyl-tRNA(Glu): step 1/2. Its function is as follows. Catalyzes the NADPH-dependent reduction of glutamyl-tRNA(Glu) to glutamate 1-semialdehyde (GSA). In Idiomarina loihiensis (strain ATCC BAA-735 / DSM 15497 / L2-TR), this protein is Glutamyl-tRNA reductase.